The following is a 475-amino-acid chain: NADP-dependent glyceraldehyde-3-phosphate dehydrogenase (475 aa).

Residue arginine 103 participates in substrate binding. Serine 151 provides a ligand contact to NADP(+). 154–155 (NY) contacts substrate. NADP(+) is bound by residues lysine 177, threonine 180, aspartate 215, and 230-251 (GSTGIGERIGKMAGMRPIMLEL). Catalysis depends on residues glutamate 250 and cysteine 284. Position 283-285 (283-285 (RCT)) interacts with substrate. Glutamate 377 is a binding site for NADP(+). Substrate is bound at residue arginine 437.

This sequence belongs to the aldehyde dehydrogenase family. In terms of assembly, homotetramer.

It catalyses the reaction D-glyceraldehyde 3-phosphate + NADP(+) + H2O = (2R)-3-phosphoglycerate + NADPH + 2 H(+). This is NADP-dependent glyceraldehyde-3-phosphate dehydrogenase (gapN) from Streptococcus mutans serotype c (strain ATCC 700610 / UA159).